The sequence spans 103 residues: Large ribosomal subunit protein bL21 (103 aa).

Belongs to the bacterial ribosomal protein bL21 family. In terms of assembly, part of the 50S ribosomal subunit. Contacts protein L20.

In terms of biological role, this protein binds to 23S rRNA in the presence of protein L20. The sequence is that of Large ribosomal subunit protein bL21 from Paracidovorax citrulli (strain AAC00-1) (Acidovorax citrulli).